The primary structure comprises 400 residues: MRSVADRVKRIGLSETYAILDKVKKMKAEGHVVYDLGGGEPDFSTPEHIINFTVSAMKNGMTHYTASKGSPGLLKAIANRLFEENHISACWDKNIIVTPSAKHALFITLMTLLNPGDEIVIPSPCWVSYIAMAEMAGAKAVDLPLTRENKYQITRKALAACITDKTRVLLLNNPNNPTGHILTEEEIQVICQVALEHDLFVVMDEIYEHIRYITAPHRSIAAEPGMFERTITVSGFSKAWAMTGWRLGYLCAPEYVLNEILKVQQHSVGCAGAFIQQGGLAALIGDRQPMEDMVKAYRKRRDYMVDSLNRIPGIECYVPEGGLYVYADIRGLGMGDAQTFTLWLLAHAHVAVTPGTAFGKEETMMIRLSFAGAMETIVAAMDSIAEAITEYDASLQQEAS.

3 residues coordinate L-aspartate: Gly37, Trp126, and Asn176. At Lys238 the chain carries N6-(pyridoxal phosphate)lysine. Residue Arg367 participates in L-aspartate binding.

The protein belongs to the class-I pyridoxal-phosphate-dependent aminotransferase family. As to quaternary structure, homodimer. Requires pyridoxal 5'-phosphate as cofactor.

The protein localises to the cytoplasm. It carries out the reaction L-aspartate + 2-oxoglutarate = oxaloacetate + L-glutamate. Catalyzes the reversible conversion of aspartate and 2-oxoglutarate to glutamate and oxaloacetate. Has very weak prephenate aminotransferase activity. This Musicola paradisiaca (strain Ech703) (Dickeya paradisiaca) protein is Aspartate aminotransferase.